A 507-amino-acid chain; its full sequence is ATP synthase subunit alpha, chloroplastic (507 aa).

169-176 lines the ATP pocket; sequence IGDRQTGK.

Belongs to the ATPase alpha/beta chains family. As to quaternary structure, F-type ATPases have 2 components, CF(1) - the catalytic core - and CF(0) - the membrane proton channel. CF(1) has five subunits: alpha(3), beta(3), gamma(1), delta(1), epsilon(1). CF(0) has four main subunits: a, b, b' and c.

The protein localises to the plastid. Its subcellular location is the chloroplast thylakoid membrane. The enzyme catalyses ATP + H2O + 4 H(+)(in) = ADP + phosphate + 5 H(+)(out). In terms of biological role, produces ATP from ADP in the presence of a proton gradient across the membrane. The alpha chain is a regulatory subunit. In Saccharum hybrid (Sugarcane), this protein is ATP synthase subunit alpha, chloroplastic.